Reading from the N-terminus, the 1342-residue chain is DNA-directed RNA polymerase subunit beta (1342 aa).

It belongs to the RNA polymerase beta chain family. As to quaternary structure, the RNAP catalytic core consists of 2 alpha, 1 beta, 1 beta' and 1 omega subunit. When a sigma factor is associated with the core the holoenzyme is formed, which can initiate transcription.

The catalysed reaction is RNA(n) + a ribonucleoside 5'-triphosphate = RNA(n+1) + diphosphate. DNA-dependent RNA polymerase catalyzes the transcription of DNA into RNA using the four ribonucleoside triphosphates as substrates. This Vibrio campbellii (strain ATCC BAA-1116) protein is DNA-directed RNA polymerase subunit beta.